The primary structure comprises 86 residues: Beta-toxin Tz1 (86 aa).

An N-terminal signal peptide occupies residues 1-20 (MTRFVLFICCFFLIGMVVEC). The LCN-type CS-alpha/beta domain maps to 21–83 (KDGYLVGNDG…TWDRATNRCG (63 aa)). 4 cysteine pairs are disulfide-bonded: C31/C82, C35/C57, C43/C63, and C47/C65. Residue R84 is modified to Arginine amide.

It belongs to the long (4 C-C) scorpion toxin superfamily. Sodium channel inhibitor family. Beta subfamily. Expressed by the venom gland.

It localises to the secreted. Its function is as follows. Beta toxins bind voltage-independently at site-4 of sodium channels (Nav) and shift the voltage of activation toward more negative potentials thereby affecting sodium channel activation and promoting spontaneous and repetitive firing. Strongly affects skeletal muscle channels Nav1.4/SCN4A, poorly affects the neuronal channels Nav1.6/SCN8A and Nav1.2/SCN2A. Induces spastic paralysis of rear limbs, increased salivation, apnea, tachycardia and increased perspiration. The protein is Beta-toxin Tz1 of Tityus zulianus (Venezuelan scorpion).